The chain runs to 963 residues: Translation initiation factor IF-2 (963 aa).

Basic and acidic residues predominate over residues serine 53 to glutamine 77. Positions serine 53–proline 377 are disordered. Over residues serine 78–valine 87 the composition is skewed to polar residues. Composition is skewed to basic and acidic residues over residues isoleucine 98 to aspartate 110, glutamate 123 to glutamate 183, aspartate 197 to alanine 250, and proline 267 to glutamate 278. Over residues serine 343–glycine 356 the composition is skewed to gly residues. A tr-type G domain is found at proline 463–lysine 632. Residues glycine 472–threonine 479 form a G1 region. Glycine 472–threonine 479 contacts GTP. The segment at glycine 497–histidine 501 is G2. A G3 region spans residues aspartate 518–glycine 521. GTP contacts are provided by residues aspartate 518 to histidine 522 and asparagine 572 to aspartate 575. The tract at residues asparagine 572–aspartate 575 is G4. The G5 stretch occupies residues serine 608–lysine 610.

Belongs to the TRAFAC class translation factor GTPase superfamily. Classic translation factor GTPase family. IF-2 subfamily.

The protein resides in the cytoplasm. One of the essential components for the initiation of protein synthesis. Protects formylmethionyl-tRNA from spontaneous hydrolysis and promotes its binding to the 30S ribosomal subunits. Also involved in the hydrolysis of GTP during the formation of the 70S ribosomal complex. The polypeptide is Translation initiation factor IF-2 (Cupriavidus taiwanensis (strain DSM 17343 / BCRC 17206 / CCUG 44338 / CIP 107171 / LMG 19424 / R1) (Ralstonia taiwanensis (strain LMG 19424))).